A 1914-amino-acid polypeptide reads, in one-letter code: Fatty acid synthase beta subunit stcK (1914 aa).

The interval 17 to 395 (LYACFGGQGP…LEGTGMNVVN (379 aa)) is acetyltransferase (AT) domain. The tract at residues 446 to 692 (TRLLGTPHVM…LIVEAPGVKD (247 aa)) is enoyl reductase (ER) domain. The dehydratase (DH) domain stretch occupies residues 1009–1509 (GECAWGYAAL…RANDRLRMEI (501 aa)). Residues 1398-1532 (FLNRHGAPRV…VRVLKESTGE (135 aa)) enclose the MaoC-like domain. The malonyl/palmitoyl transferase (MT/PT) domain stretch occupies residues 1548 to 1900 (YVFTGQGTQE…IRLVQGVTQS (353 aa)).

The protein belongs to the fungal fatty acid synthetase subunit beta family. In terms of assembly, [Alpha(6)beta(6)] hexamers of two multifunctional subunits (alpha and beta).

The enzyme catalyses acetyl-CoA + n malonyl-CoA + 2n NADPH + 4n H(+) = a long-chain-acyl-CoA + n CoA + n CO2 + 2n NADP(+).. It catalyses the reaction holo-[ACP] + acetyl-CoA = acetyl-[ACP] + CoA. It carries out the reaction holo-[ACP] + malonyl-CoA = malonyl-[ACP] + CoA. The catalysed reaction is a (3R)-hydroxyacyl-[ACP] = a (2E)-enoyl-[ACP] + H2O. The enzyme catalyses a 2,3-saturated acyl-[ACP] + NAD(+) = a (2E)-enoyl-[ACP] + NADH + H(+). It catalyses the reaction (9Z)-octadecenoyl-[ACP] + H2O = (9Z)-octadecenoate + holo-[ACP] + H(+). It functions in the pathway mycotoxin biosynthesis; sterigmatocystin biosynthesis. In terms of biological role, fatty acid synthase beta subunit; part of the gene cluster that mediates the biosynthesis of sterigmatocystin (ST), a polyketide-derived furanocoumarin which is part of the most toxic and carcinogenic compounds among the known mycotoxins. The first step in the biosynthesis of sterigmatocystin is the production of hexanoate by the fatty acid synthase (FAS) units stcJ and stcK. The polyketide backbone is assembled by the non-reducing polyketide synthase stcA by condensation of the starter hexanoyl-CoA and 7 malonyl-CoA extender units followed by cyclization and release of norsolorinic acid. Norsolorinic acid is the first stable intermediate in the biosynthesis of sterigmatocystin and is converted into averantin (AVN) by the ketoreductase stcE which reduces the hexanoate ketone to an alcohol. Averantin is then oxidized into 5'-hydroxyaverantin (HAVN) by the cytochrome P450 monooxygenase stcF. 5'-hydroxyaverantin is further converted to 5'-oxyaverantin (OAVN) by the 5'-hydroxyaverantin dehydrogenase stcG. The next step is the conversion of OAVN into averufin (AVF) which is catalyzed by a yet to be identified enzyme. The cytochrome P450 monooxygenase stcB and the flavin-binding monooxygenase stcW are both required for the conversion of averufin to 1-hydroxyversicolorone. The esterase stcI probably catalyzes the formation of versiconal hemiacetal acetate from 1-hydroxyversicolorone. The oxydoreductase stcN then probably catalyzes the biosynthetic step from versiconal to versicolorin B (VERB). The next step is performed by the versicolorin B desaturase stcL to produce versicolorin A (VERA). The ketoreductase stcU and the cytochrome P450 monooxygenase stcS are involved in the conversion of versicolorin A to demethylsterigmatocystin. The Baeyer-Villiger oxidas stcQ and the reductase stcR might be involved in the biosynthetic step from versicolorin A to demethylsterigmatocystin. The final step in the biosynthesis of sterigmatocystin is the methylation of demethylsterigmatocystin catalyzed by the methyltransferase stcP. This chain is Fatty acid synthase beta subunit stcK, found in Emericella nidulans (strain FGSC A4 / ATCC 38163 / CBS 112.46 / NRRL 194 / M139) (Aspergillus nidulans).